Reading from the N-terminus, the 65-residue chain is UPF0434 protein Mpe_A2486 (65 aa).

This sequence belongs to the UPF0434 family.

The polypeptide is UPF0434 protein Mpe_A2486 (Methylibium petroleiphilum (strain ATCC BAA-1232 / LMG 22953 / PM1)).